Here is an 836-residue protein sequence, read N- to C-terminus: Protein translocase subunit SecA (836 aa).

Residues glutamine 85, 103-107 (GEGKT), and aspartate 492 each bind ATP. The segment at 786 to 817 (REQVAKETSTNQGGDDTLKKQPIKKEPKIGRN) is disordered. Positions 801–816 (DTLKKQPIKKEPKIGR) are enriched in basic and acidic residues. Residues cysteine 820, cysteine 822, cysteine 831, and cysteine 832 each coordinate Zn(2+).

Belongs to the SecA family. As to quaternary structure, monomer and homodimer. Part of the essential Sec protein translocation apparatus which comprises SecA, SecYEG and auxiliary proteins SecDF. Other proteins may also be involved. Zn(2+) serves as cofactor.

Its subcellular location is the cell membrane. It is found in the cytoplasm. The enzyme catalyses ATP + H2O + cellular proteinSide 1 = ADP + phosphate + cellular proteinSide 2.. Part of the Sec protein translocase complex. Interacts with the SecYEG preprotein conducting channel. Has a central role in coupling the hydrolysis of ATP to the transfer of proteins into and across the cell membrane, serving as an ATP-driven molecular motor driving the stepwise translocation of polypeptide chains across the membrane. This chain is Protein translocase subunit SecA, found in Clostridium tetani (strain Massachusetts / E88).